The sequence spans 258 residues: Type III pantothenate kinase (258 aa).

6–13 (DAGNTRIK) provides a ligand contact to ATP. Residues Tyr98 and 105-108 (GSDR) each bind substrate. The Proton acceptor role is filled by Asp107. Thr131 contacts ATP. Thr184 contributes to the substrate binding site.

It belongs to the type III pantothenate kinase family. In terms of assembly, homodimer. It depends on NH4(+) as a cofactor. Requires K(+) as cofactor.

It is found in the cytoplasm. It catalyses the reaction (R)-pantothenate + ATP = (R)-4'-phosphopantothenate + ADP + H(+). The protein operates within cofactor biosynthesis; coenzyme A biosynthesis; CoA from (R)-pantothenate: step 1/5. Its function is as follows. Catalyzes the phosphorylation of pantothenate (Pan), the first step in CoA biosynthesis. The polypeptide is Type III pantothenate kinase (Herminiimonas arsenicoxydans).